The sequence spans 2329 residues: Genome polyprotein (2329 aa).

Residues 29–182 (MEFTLHNGEK…DPSDVLVFVP (154 aa)) enclose the Peptidase C28 domain. Active-site for leader protease activity residues include Cys-51, His-148, and Asp-163. Disordered regions lie at residues 197 to 218 (QKRL…QSGN) and 238 to 264 (QLGD…NNTQ). Gly-202 carries N-myristoyl glycine; by host lipidation. Composition is skewed to polar residues over residues 204 to 218 (GQSS…QSGN) and 238 to 251 (QLGD…SNEG). The span at 252–264 (STDTTSTHTNNTQ) shows a compositional bias: low complexity. Positions 787-795 (ALLRSATYY) are antigenic epitope. The Cell attachment site motif lies at 866–868 (RGD). Positions 1186–1350 (NVHIANLCKV…DGYKINNKLD (165 aa)) constitute an SF3 helicase domain. 1214 to 1221 (GKSGQGKS) contacts ATP. The stretch at 1478 to 1498 (KENFEIVALCLTLLANIVIMI) is an intramembrane region. Basic and acidic residues-rich tracts occupy residues 1526–1535 (KTLDEAEKNP) and 1546–1558 (FRER…KTSD). The disordered stretch occupies residues 1526–1577 (KTLDEAEKNPLETSGASTVGFRERTLPGRKTSDDVNSEPVKSVEEQPQAEGP). O-(5'-phospho-RNA)-tyrosine occurs at positions 1578, 1601, and 1625. One can recognise a Peptidase C3 domain in the interval 1649 to 1845 (APPTDLQKMV…YCSCVSRSML (197 aa)). Residue His-1692 is the For protease 3C activity; Proton donor/acceptor of the active site. Residues Asp-1730 and Cys-1809 each act as for protease 3C activity in the active site. 2 short sequence motifs (nuclear localization signal) span residues 1875–1883 (MRKTKLAPT) and 1876–1883 (RKTKLAPT). The RdRp catalytic domain maps to 2093-2211 (RNVWDVDYSA…ASDYDLDFEA (119 aa)). Asp-2197 functions as the For RdRp activity in the catalytic mechanism.

It belongs to the picornaviruses polyprotein family. Interacts with host ISG15. As to quaternary structure, interacts (via R-G-D motif) with host ITGAV/ITGB6. Interacts with host MAVS; this interaction inhibits binding of host TRAF3 to MAVS, thereby suppressing interferon-mediated responses. In terms of assembly, forms homooligomers. Homohexamer. Interacts with host VIM. Interacts with host BECN1. As to quaternary structure, interacts with host DCTN3. In terms of assembly, interacts with RNA-dependent RNA polymerase; this interaction allows 3B-1 to binds 2 polymerases and act as a primer. It also allows the recruitment of the RNA-dependent RNA polymerase to host membranes. Interacts with RNA-dependent RNA polymerase; this interaction allows 3B-2 to act as a primer. As to quaternary structure, interacts with RNA-dependent RNA polymerase; this interaction allows 3B-3 to act as a primer. In terms of assembly, interacts with 3B-1; this interaction allows 3B-1 to binds 2 polymerases and act as a primer. It also allows the recruitment of the RNA-dependent RNA polymerase to host membranes. Interacts with 3B-2; this interaction allows 3B-2 to act as a primer. Interacts with 3B-3; this interaction allows 3B-3 to act as a primer. Post-translationally, specific enzymatic cleavages in vivo by the viral proteases yield a variety of precursors and mature proteins. The polyprotein seems to be cotranslationally cleaved at the 2A/2B junction by a ribosomal skip from one codon to the next without formation of a peptide bond. This process would release the L-P1-2A peptide from the translational complex. During virion maturation, immature virions are rendered infectious following cleavage of VP0 into VP4 and VP2. This maturation seems to be an autocatalytic event triggered by the presence of RNA in the capsid and is followed by a conformational change of the particle. In terms of processing, myristoylation is required during RNA encapsidation and formation of the mature virus particle. Post-translationally, uridylylated by the polymerase and covalently linked to the 5'-end of genomic RNA. These uridylylated forms act as a nucleotide-peptide primer for the polymerase.

The protein localises to the host nucleus. It is found in the host cytoplasm. Its subcellular location is the virion. The protein resides in the host endoplasmic reticulum membrane. It localises to the host cytoplasmic vesicle membrane. It carries out the reaction Autocatalytically cleaves itself from the polyprotein of the foot-and-mouth disease virus by hydrolysis of a Lys-|-Gly bond, but then cleaves host cell initiation factor eIF-4G at bonds -Gly-|-Arg- and -Lys-|-Arg-.. It catalyses the reaction a ribonucleoside 5'-triphosphate + H2O = a ribonucleoside 5'-diphosphate + phosphate + H(+). The enzyme catalyses RNA(n) + a ribonucleoside 5'-triphosphate = RNA(n+1) + diphosphate. The catalysed reaction is Selective cleavage of Gln-|-Gly bond in the poliovirus polyprotein. In other picornavirus reactions Glu may be substituted for Gln, and Ser or Thr for Gly.. In terms of biological role, autocatalytically cleaves itself from the polyprotein at the L/VP0 junction. Also cleaves the host translation initiation factors EIF4G1 and EIF4G3, in order to shut off the capped cellular mRNA transcription. Plays a role in counteracting host innate antiviral response using diverse mechanisms. Possesses a deubiquitinase activity acting on both 'Lys-48' and 'Lys-63'-linked polyubiquitin chains. In turn, inhibits the ubiquitination and subsequent activation of key signaling molecules of type I IFN response such as host RIGI, TBK1, TRAF3 and TRAF6. Inhibits host NF-kappa-B activity by inducing a decrease in RELA mRNA levels. Cleaves a peptide bond in the C-terminus of host ISG15, resulting in the damaging of this modifier that can no longer be attached to target proteins. Also cleaves host G3BP1 and G3BP2 in order to inhibit cytoplasmic stress granules assembly. Its function is as follows. Lies on the inner surface of the capsid shell. After binding to the host receptor, the capsid undergoes conformational changes. Capsid protein VP4 is released, capsid protein VP1 N-terminus is externalized, and together, they shape a pore in the host membrane through which the viral genome is translocated into the host cell cytoplasm. After genome has been released, the channel shrinks. Forms an icosahedral capsid of pseudo T=3 symmetry with capsid proteins VP1 and VP3. The capsid is composed of 60 copies of each capsid protein organized in the form of twelve pentamers and encloses the viral positive strand RNA genome. Upon acidifcation in the endosome, dissociates into pentamers. Functionally, forms an icosahedral capsid of pseudo T=3 symmetry with capsid proteins VP0 and VP3. The capsid is composed of 60 copies of each capsid protein organized in the form of twelve pentamers and encloses the viral positive strand RNA genome. Upon acidifcation in the endosome, dissociates into pentamers. In terms of biological role, forms an icosahedral capsid of pseudo T=3 symmetry with capsid proteins VP2 and VP3. The capsid is composed of 60 copies of each capsid protein organized in the form of twelve pentamers and encloses the viral positive strand RNA genome. Mediates cell entry by attachment to an integrin receptor, usually host ITGAV/ITGB6. In addition, targets host MAVS to suppress type I IFN pathway. Upon acidifcation in the endosome, dissociates into pentamers. Its function is as follows. Mediates self-processing of the polyprotein by a translational effect termed 'ribosome skipping'. Mechanistically, 2A-mediated cleavage occurs between the C-terminal glycine and the proline of the downstream protein 2B. In the case of foot-and-mouth disease virus, the 2A oligopeptide is post-translationally 'trimmed' from the C-terminus of the upstream protein 1D by 3C proteinase. Plays an essential role in the virus replication cycle by acting as a viroporin. Creates a pore in the host endoplasmic reticulum and as a consequence releases Ca2+ in the cytoplasm of infected cell. In turn, high levels of cytoplasmic calcium may trigger membrane trafficking and transport of viral ER-associated proteins to viroplasms, sites of viral genome replication. Functionally, associates with and induces structural rearrangements of intracellular membranes. Triggers host autophagy by interacting with host BECN1 and thereby promotes viral replication. Participates in viral replication and interacts with host DHX9. Displays RNA-binding, nucleotide binding and NTPase activities. May play a role in virion morphogenesis and viral RNA encapsidation by interacting with the capsid protein VP3. In terms of biological role, plays important roles in virus replication, virulence and host range. Cooperates with host DDX56 to inhibit IRF3 nuclear translocation and subsequent type I interferon production. Its function is as follows. Covalently linked to the 5'-end of both the positive-strand and negative-strand genomic RNAs. Acts as a genome-linked replication primer. Cysteine protease that generates mature viral proteins from the precursor polyprotein. In addition to its proteolytic activity, binds to viral RNA and thus influences viral genome replication. RNA and substrate bind cooperatively to the protease. Functionally, RNA-directed RNA polymerase 3D-POL replicates genomic and antigenomic RNA by recognizing replications specific signals. Covalently attaches UMP to a tyrosine of VPg, which is used to prime RNA synthesis. The positive stranded RNA genome is first replicated at virus induced membranous vesicles, creating a dsRNA genomic replication form. This dsRNA is then used as template to synthesize positive stranded RNA genomes. ss(+)RNA genomes are either translated, replicated or encapsidated. This is Genome polyprotein from Foot-and-mouth disease virus serotype Asia-1 (FMDV).